Here is a 256-residue protein sequence, read N- to C-terminus: Pyridoxine 5'-phosphate synthase (256 aa).

N12 is a binding site for 3-amino-2-oxopropyl phosphate. Residue 14–15 participates in 1-deoxy-D-xylulose 5-phosphate binding; that stretch reads DH. R23 lines the 3-amino-2-oxopropyl phosphate pocket. The active-site Proton acceptor is H48. R50 and H55 together coordinate 1-deoxy-D-xylulose 5-phosphate. The active-site Proton acceptor is E75. T105 is a 1-deoxy-D-xylulose 5-phosphate binding site. H199 serves as the catalytic Proton donor. 3-amino-2-oxopropyl phosphate contacts are provided by residues G200 and 221 to 222; that span reads GY.

The protein belongs to the PNP synthase family. As to quaternary structure, homooctamer; tetramer of dimers.

The protein resides in the cytoplasm. The catalysed reaction is 3-amino-2-oxopropyl phosphate + 1-deoxy-D-xylulose 5-phosphate = pyridoxine 5'-phosphate + phosphate + 2 H2O + H(+). The protein operates within cofactor biosynthesis; pyridoxine 5'-phosphate biosynthesis; pyridoxine 5'-phosphate from D-erythrose 4-phosphate: step 5/5. Functionally, catalyzes the complicated ring closure reaction between the two acyclic compounds 1-deoxy-D-xylulose-5-phosphate (DXP) and 3-amino-2-oxopropyl phosphate (1-amino-acetone-3-phosphate or AAP) to form pyridoxine 5'-phosphate (PNP) and inorganic phosphate. In Bradyrhizobium sp. (strain ORS 278), this protein is Pyridoxine 5'-phosphate synthase.